The primary structure comprises 448 residues: Glucose-6-phosphate isomerase (448 aa).

The active-site Proton donor is the E290. Catalysis depends on residues H311 and K425.

It belongs to the GPI family.

It is found in the cytoplasm. It catalyses the reaction alpha-D-glucose 6-phosphate = beta-D-fructose 6-phosphate. The protein operates within carbohydrate biosynthesis; gluconeogenesis. It functions in the pathway carbohydrate degradation; glycolysis; D-glyceraldehyde 3-phosphate and glycerone phosphate from D-glucose: step 2/4. Its function is as follows. Catalyzes the reversible isomerization of glucose-6-phosphate to fructose-6-phosphate. This Lactococcus lactis subsp. lactis (strain IL1403) (Streptococcus lactis) protein is Glucose-6-phosphate isomerase.